A 289-amino-acid chain; its full sequence is Acetyl-coenzyme A carboxylase carboxyl transferase subunit beta (289 aa).

One can recognise a CoA carboxyltransferase N-terminal domain in the interval leucine 24–alanine 289. Zn(2+) is bound by residues cysteine 28, cysteine 31, cysteine 47, and cysteine 50. Residues cysteine 28 to cysteine 50 form a C4-type zinc finger.

It belongs to the AccD/PCCB family. Acetyl-CoA carboxylase is a heterohexamer composed of biotin carboxyl carrier protein (AccB), biotin carboxylase (AccC) and two subunits each of ACCase subunit alpha (AccA) and ACCase subunit beta (AccD). Zn(2+) serves as cofactor.

It localises to the cytoplasm. It carries out the reaction N(6)-carboxybiotinyl-L-lysyl-[protein] + acetyl-CoA = N(6)-biotinyl-L-lysyl-[protein] + malonyl-CoA. The protein operates within lipid metabolism; malonyl-CoA biosynthesis; malonyl-CoA from acetyl-CoA: step 1/1. In terms of biological role, component of the acetyl coenzyme A carboxylase (ACC) complex. Biotin carboxylase (BC) catalyzes the carboxylation of biotin on its carrier protein (BCCP) and then the CO(2) group is transferred by the transcarboxylase to acetyl-CoA to form malonyl-CoA. This chain is Acetyl-coenzyme A carboxylase carboxyl transferase subunit beta, found in Gluconobacter oxydans (strain 621H) (Gluconobacter suboxydans).